A 342-amino-acid chain; its full sequence is Leucine-rich repeat-containing protein 23 (342 aa).

Residues 1-30 (MSDEDDLEDFETDQDDLEREDDEKETEEWE) show a composition bias toward acidic residues. The segment at 1–42 (MSDEDDLEDFETDQDDLEREDDEKETEEWEDYRKEGEESEDW) is disordered. Residues 3–27 (DEDDLEDFETDQDDLEREDDEKETE) adopt a coiled-coil conformation. LRR repeat units lie at residues 91-112 (HLRY…NHLT), 113-133 (NLLW…NELP), 134-154 (YLQI…ISHP), 155-176 (RLAS…DPQK), 179-199 (SLHT…INLP), 200-221 (KLKN…ENLS), 222-243 (NLTT…SKEM), and 245-266 (SLQY…AKLR). The interval 207-342 (AQNMLKKVEG…PESELDQSST (136 aa)) is interaction with RSPH9. An LRRCT domain is found at 279 to 317 (NPCTDENDYRQEALVQIAHLERLDKEFYEEEERAEADEI). The stretch at 306-332 (YEEEERAEADEIRQRMKEEQEQEAEVE) forms a coiled coil. A disordered region spans residues 307 to 342 (EEEERAEADEIRQRMKEEQEQEAEVEPESELDQSST). Residues 314 to 324 (ADEIRQRMKEE) show a composition bias toward basic and acidic residues. Residues 325-342 (QEQEAEVEPESELDQSST) show a composition bias toward acidic residues.

Component of the axonemal radial spoke complex. Interacts with RSPH3. Interacts with RSPH9.

Its subcellular location is the cytoplasm. It is found in the cytoskeleton. The protein resides in the flagellum axoneme. Functionally, essential for sperm motility and male fertility. Plays an important role in the proper assembly of the third radial spoke (RS3) head and the bridge structure between RS2 and RS3 in the sperm flagella. The polypeptide is Leucine-rich repeat-containing protein 23 (LRRC23) (Bos taurus (Bovine)).